Reading from the N-terminus, the 161-residue chain is GTP-dependent dephospho-CoA kinase (161 aa).

Positions 40, 41, 42, 59, and 112 each coordinate GTP.

The protein belongs to the GTP-dependent DPCK family.

It catalyses the reaction 3'-dephospho-CoA + GTP = GDP + CoA + H(+). It participates in cofactor biosynthesis; coenzyme A biosynthesis. In terms of biological role, catalyzes the GTP-dependent phosphorylation of the 3'-hydroxyl group of dephosphocoenzyme A to form coenzyme A (CoA). The protein is GTP-dependent dephospho-CoA kinase of Methanoculleus marisnigri (strain ATCC 35101 / DSM 1498 / JR1).